The sequence spans 150 residues: 3-dehydroquinate dehydratase (150 aa).

Tyr26 acts as the Proton acceptor in catalysis. 3 residues coordinate substrate: Asn77, His83, and Asp90. His103 (proton donor) is an active-site residue. Substrate-binding positions include 104 to 105 (LS) and Arg114.

Belongs to the type-II 3-dehydroquinase family. Homododecamer.

The catalysed reaction is 3-dehydroquinate = 3-dehydroshikimate + H2O. The protein operates within metabolic intermediate biosynthesis; chorismate biosynthesis; chorismate from D-erythrose 4-phosphate and phosphoenolpyruvate: step 3/7. Its function is as follows. Catalyzes a trans-dehydration via an enolate intermediate. This is 3-dehydroquinate dehydratase from Sodalis glossinidius (strain morsitans).